Consider the following 457-residue polypeptide: UDP-glycosyltransferase 708C1 (457 aa).

Gly-31 is a UDP-alpha-D-glucose binding site. His-32 serves as the catalytic Proton acceptor. His-32 lines the an anthocyanidin pocket. Thr-34 provides a ligand contact to UDP-alpha-D-glucose. Asn-94 is an an anthocyanidin binding site. Residue Asp-129 is the Charge relay of the active site. Thr-150 is a UDP-alpha-D-glucose binding site. Residues Asn-279 to Arg-280 form a UDP region. Residues Val-341, Gln-343, His-358, Trp-361, Asn-362, Ser-363, and Glu-366 each coordinate UDP-alpha-D-glucose. Gly-381 provides a ligand contact to an anthocyanidin. Residues Asp-382 and Gln-383 each coordinate UDP-alpha-D-glucose.

Belongs to the UDP-glycosyltransferase family. In terms of tissue distribution, expressed in cotyledons. Not detected in flowers, leaves, roots and hypocotyls.

It catalyses the reaction a 3'-hydro-2'-hydroxy-beta-oxodihydrochalcone + UDP-alpha-D-glucose = a 3'-(beta-D-glucopyranosyl)-2'-hydroxy-beta-oxodihydrochalcone + UDP + H(+). In terms of biological role, UDP-glucose-dependent glucosyltransferase catalyzing the C-glucosylation of 2-hydroxyflavanones (2-hydroxynaringenin, 2-hydroxyeriodictyol and 2-hydroxypinocembrin) and phloretin. No activity with flavanones, flavones or flavonols. Exhibits C-glycosylation activity toward 2',4',6'-trihydroxyacetophenone and phloretin using UDP-glucose as sugar donor. Can use UDP-galactose as sugar donor, but catalytic efficiency is 14-fold lower toward UDP-galactose than toward UDP-glucose. This Fagopyrum esculentum (Common buckwheat) protein is UDP-glycosyltransferase 708C1.